Consider the following 445-residue polypeptide: Flagellum-associated coiled-coil domain-containing protein 1 (445 aa).

Residues 26–47 (PQLPRKNSTGSSKLTPLVPAPK) are disordered. Over residues 30 to 39 (RKNSTGSSKL) the composition is skewed to polar residues. Coiled coils occupy residues 122 to 226 (SRTN…TYQD) and 283 to 315 (AVFE…TKEV). Position 376 is an N6-acetyllysine (Lys-376). Residues 387 to 414 (EKYKHTIQILTEENIHLKQKIISKNEEI) adopt a coiled-coil conformation.

It is found in the cytoplasm. The protein localises to the cytoplasmic granule. The protein resides in the cell projection. Its subcellular location is the cilium. It localises to the flagellum. The chain is Flagellum-associated coiled-coil domain-containing protein 1 from Homo sapiens (Human).